The sequence spans 473 residues: Cannabinoid receptor 1 (473 aa).

The Extracellular segment spans residues 1–118 (MKSILDGLAD…CFMILNPSQQ (118 aa)). Residues 2–23 (KSILDGLADTTFRTITTDLLYV) are required for mitochondrial localization. Residues Asn-79 and Asn-85 are each glycosylated (N-linked (GlcNAc...) asparagine). Residues 119 to 144 (LAIAVLSLTLGTFTVLENLLVLCVIL) form a helical membrane-spanning segment. Topologically, residues 145 to 156 (HSRSLRCRPSYH) are cytoplasmic. Residues 157 to 177 (FIGSLAVADLLGSVIFVYSFV) traverse the membrane as a helical segment. The Extracellular portion of the chain corresponds to 178 to 189 (DFHVFHRKDSPN). Residues 190-214 (VFLFKLGGVTASFTASVGSLFLTAI) form a helical membrane-spanning segment. Over 215-234 (DRYISIHRPLAYKRIVTRPK) the chain is Cytoplasmic. A helical transmembrane segment spans residues 235–257 (AVVAFCVMWTIAIVIAVLPLLGW). The Extracellular segment spans residues 258 to 275 (NCKKLNSVCSDIFPLIDE). A helical transmembrane segment spans residues 276–301 (TYLMFWIGVTSILLLFIVYAYMYILW). Residues 302 to 346 (KAHSHAVRMLQRGTQKSIIIQSTEDGKVQITRPDQTRMDIRLAKT) lie on the Cytoplasmic side of the membrane. The chain crosses the membrane as a helical span at residues 347–367 (LVLILVVLIICWGPLLAIMVY). Topologically, residues 368–379 (DVFGKMNKLIKT) are extracellular. The chain crosses the membrane as a helical span at residues 380–401 (IFAFCSMLCLLNSTVNPIIYAL). Topologically, residues 402–473 (RSKDLRHAFR…VSTDTTAEAL (72 aa)) are cytoplasmic. Residue Cys-417 is the site of S-palmitoyl cysteine attachment.

This sequence belongs to the G-protein coupled receptor 1 family. In terms of processing, palmitoylation at Cys-417 is important for recruitment at both plasma membrane and lipid rafts and association with G protein alpha subunits.

The protein resides in the cell membrane. Its subcellular location is the mitochondrion outer membrane. The protein localises to the cell projection. It localises to the axon. It is found in the presynapse. G-protein coupled receptor for cannabinoids. Mediates many cannabinoid-induced effects in the central nervous system (CNS), as well as in peripheral tissues. Regulates cellular respiration and energy production in response to cannabinoids. Signaling typically involves reduction in cyclic AMP. The polypeptide is Cannabinoid receptor 1 (CNR1) (Taeniopygia guttata (Zebra finch)).